A 202-amino-acid chain; its full sequence is MPIGVPKVLFGSPGEEDAAWVDIYNRLHRERLLFLGQELDSEISNQLVGLMVYLSIEDKTRDFFLFINSPGGWVIPGIGLYDTMQFVPPDVHTICMGLAASMGSFILVGGEITKRLAFPHARVMIHQPASSFYEAQAGEFVLEAEELLKLRETLTRVYVQRTGKPLWVVSEDMERDVFLSATEAQAHGIVDLVGDENMGDLV.

Ser101 serves as the catalytic Nucleophile. The active site involves His126.

It belongs to the peptidase S14 family. As to quaternary structure, component of the chloroplastic Clp protease core complex.

The protein localises to the plastid. The protein resides in the chloroplast stroma. The enzyme catalyses Hydrolysis of proteins to small peptides in the presence of ATP and magnesium. alpha-casein is the usual test substrate. In the absence of ATP, only oligopeptides shorter than five residues are hydrolyzed (such as succinyl-Leu-Tyr-|-NHMec, and Leu-Tyr-Leu-|-Tyr-Trp, in which cleavage of the -Tyr-|-Leu- and -Tyr-|-Trp bonds also occurs).. Functionally, cleaves peptides in various proteins in a process that requires ATP hydrolysis. Has a chymotrypsin-like activity. Plays a major role in the degradation of misfolded proteins. The sequence is that of ATP-dependent Clp protease proteolytic subunit from Acorus gramineus (Dwarf sweet flag).